The sequence spans 157 residues: S-ribosylhomocysteine lyase (157 aa).

His-60, His-64, and Cys-127 together coordinate Fe cation.

The protein belongs to the LuxS family. As to quaternary structure, homodimer. Requires Fe cation as cofactor.

The catalysed reaction is S-(5-deoxy-D-ribos-5-yl)-L-homocysteine = (S)-4,5-dihydroxypentane-2,3-dione + L-homocysteine. Its function is as follows. Involved in the synthesis of autoinducer 2 (AI-2) which is secreted by bacteria and is used to communicate both the cell density and the metabolic potential of the environment. The regulation of gene expression in response to changes in cell density is called quorum sensing. Catalyzes the transformation of S-ribosylhomocysteine (RHC) to homocysteine (HC) and 4,5-dihydroxy-2,3-pentadione (DPD). The chain is S-ribosylhomocysteine lyase from Helicobacter acinonychis (strain Sheeba).